A 78-amino-acid chain; its full sequence is MSNFEERVKKIIIEQLGVKEEEVKNEASFVDDLGADSLDTVELVMALEEEFDTDIPDDEAEKITTVQAAIDYVVSSAE.

One can recognise a Carrier domain in the interval 2–77; sequence SNFEERVKKI…AAIDYVVSSA (76 aa). Serine 37 is modified (O-(pantetheine 4'-phosphoryl)serine).

Belongs to the acyl carrier protein (ACP) family. In terms of processing, 4'-phosphopantetheine is transferred from CoA to a specific serine of apo-ACP by AcpS. This modification is essential for activity because fatty acids are bound in thioester linkage to the sulfhydryl of the prosthetic group.

Its subcellular location is the cytoplasm. The protein operates within lipid metabolism; fatty acid biosynthesis. In terms of biological role, carrier of the growing fatty acid chain in fatty acid biosynthesis. Is probably involved in the biosynthesis of docosahexaenoic acid (DHA) which is produced by this bacterium as a fatty acyl component in its membrane lipid. In Moritella marina (Vibrio marinus), this protein is Acyl carrier protein.